A 214-amino-acid chain; its full sequence is MTPQPSGAPTVQVTRETERSFPRASEDEVTCPTSAPPSPTRTRGNCAEAEEGGCRGAPRKLRARRGGRSRPKSELALSKQRRSRRKKANDRERNRMHNLNSALDALRGVLPTFPDDAKLTKIETLRFAHNYIWALTQTLRIADHSLYALEPPAPHCGELGSPGGSPGDWGSLYSPVSQAGSLSPAASLEERPGLLGATFSACLSPGSLAFSDFL.

Residues 1 to 14 (MTPQPSGAPTVQVT) are compositionally biased toward polar residues. Positions 1–98 (MTPQPSGAPT…NDRERNRMHN (98 aa)) are disordered. Over residues 15–26 (RETERSFPRASE) the composition is skewed to basic and acidic residues. Composition is skewed to basic residues over residues 57–70 (APRK…GRSR) and 79–88 (KQRRSRRKKA). One can recognise a bHLH domain in the interval 83–135 (SRRKKANDRERNRMHNLNSALDALRGVLPTFPDDAKLTKIETLRFAHNYIWAL).

As to quaternary structure, efficient DNA binding requires dimerization with another bHLH protein. Interacts with ATOH8.

It is found in the nucleus. In terms of biological role, acts as a transcriptional regulator. Together with NKX2-2, initiates transcriptional activation of NEUROD1. Involved in neurogenesis. Also required for the specification of a common precursor of the 4 pancreatic endocrine cell types. The chain is Neurogenin-3 (NEUROG3) from Homo sapiens (Human).